The chain runs to 349 residues: Anthranilate phosphoribosyltransferase (349 aa).

5-phospho-alpha-D-ribose 1-diphosphate contacts are provided by residues Gly-82, 85–86 (GD), 92–95 (NVST), 110–118 (KHGNRAVSG), and Ser-122. Gly-82 is a binding site for anthranilate. A Mg(2+)-binding site is contributed by Ser-94. Asn-113 is an anthranilate binding site. Arg-168 is an anthranilate binding site. Residues Asp-227 and Glu-228 each contribute to the Mg(2+) site.

This sequence belongs to the anthranilate phosphoribosyltransferase family. As to quaternary structure, homodimer. The cofactor is Mg(2+).

The enzyme catalyses N-(5-phospho-beta-D-ribosyl)anthranilate + diphosphate = 5-phospho-alpha-D-ribose 1-diphosphate + anthranilate. Its pathway is amino-acid biosynthesis; L-tryptophan biosynthesis; L-tryptophan from chorismate: step 2/5. Its function is as follows. Catalyzes the transfer of the phosphoribosyl group of 5-phosphorylribose-1-pyrophosphate (PRPP) to anthranilate to yield N-(5'-phosphoribosyl)-anthranilate (PRA). This is Anthranilate phosphoribosyltransferase from Pseudomonas fluorescens (strain SBW25).